The primary structure comprises 382 residues: 1-deoxy-D-xylulose 5-phosphate reductoisomerase (382 aa).

NADPH-binding residues include T10, G11, S12, I13, N38, and N120. Residue K121 participates in 1-deoxy-D-xylulose 5-phosphate binding. Residue E122 coordinates NADPH. D146 contacts Mn(2+). 1-deoxy-D-xylulose 5-phosphate-binding residues include S147, E148, S172, and H195. E148 contacts Mn(2+). Position 201 (G201) interacts with NADPH. Residues S208, N213, K214, and E217 each coordinate 1-deoxy-D-xylulose 5-phosphate. E217 lines the Mn(2+) pocket.

The protein belongs to the DXR family. The cofactor is Mg(2+). Requires Mn(2+) as cofactor.

The catalysed reaction is 2-C-methyl-D-erythritol 4-phosphate + NADP(+) = 1-deoxy-D-xylulose 5-phosphate + NADPH + H(+). It functions in the pathway isoprenoid biosynthesis; isopentenyl diphosphate biosynthesis via DXP pathway; isopentenyl diphosphate from 1-deoxy-D-xylulose 5-phosphate: step 1/6. In terms of biological role, catalyzes the NADPH-dependent rearrangement and reduction of 1-deoxy-D-xylulose-5-phosphate (DXP) to 2-C-methyl-D-erythritol 4-phosphate (MEP). The sequence is that of 1-deoxy-D-xylulose 5-phosphate reductoisomerase from Thermoanaerobacter pseudethanolicus (strain ATCC 33223 / 39E) (Clostridium thermohydrosulfuricum).